A 353-amino-acid polypeptide reads, in one-letter code: Heat-inducible transcription repressor HrcA (353 aa).

It belongs to the HrcA family.

In terms of biological role, negative regulator of class I heat shock genes (grpE-dnaK-dnaJ and groELS operons). Prevents heat-shock induction of these operons. This is Heat-inducible transcription repressor HrcA from Anaeromyxobacter dehalogenans (strain 2CP-1 / ATCC BAA-258).